Consider the following 349-residue polypeptide: Aspartate carbamoyltransferase catalytic subunit (349 aa).

Arginine 59 and threonine 60 together coordinate carbamoyl phosphate. Lysine 87 serves as a coordination point for L-aspartate. Residues arginine 109, histidine 142, and glutamine 145 each contribute to the carbamoyl phosphate site. Positions 182 and 253 each coordinate L-aspartate. Carbamoyl phosphate contacts are provided by glycine 294 and proline 295.

It belongs to the aspartate/ornithine carbamoyltransferase superfamily. ATCase family. As to quaternary structure, heterododecamer (2C3:3R2) of six catalytic PyrB chains organized as two trimers (C3), and six regulatory PyrI chains organized as three dimers (R2).

The catalysed reaction is carbamoyl phosphate + L-aspartate = N-carbamoyl-L-aspartate + phosphate + H(+). Its pathway is pyrimidine metabolism; UMP biosynthesis via de novo pathway; (S)-dihydroorotate from bicarbonate: step 2/3. Functionally, catalyzes the condensation of carbamoyl phosphate and aspartate to form carbamoyl aspartate and inorganic phosphate, the committed step in the de novo pyrimidine nucleotide biosynthesis pathway. The chain is Aspartate carbamoyltransferase catalytic subunit from Synechococcus sp. (strain CC9902).